Reading from the N-terminus, the 393-residue chain is Transcription factor bHLH112 (393 aa).

Disordered stretches follow at residues 248 to 277 and 332 to 356; these read TRAQ…SPLP and KQGA…NENH. The segment covering 254–265 has biased composition (basic and acidic residues); it reads SLKRAKDNESAA. The bHLH domain maps to 270 to 319; sequence VTTPSPLPTFKVRKENLRDQITSLQQLVSPFGKTDTASVLQEAIEYIKFL. Low complexity predominate over residues 332–347; that stretch reads KQGASNQQQQQISGKS.

In terms of assembly, homodimer.

The protein localises to the nucleus. The chain is Transcription factor bHLH112 (BHLH112) from Arabidopsis thaliana (Mouse-ear cress).